A 611-amino-acid chain; its full sequence is tRNA uridine 5-carboxymethylaminomethyl modification enzyme MnmG (611 aa).

Position 14–19 (14–19 (GAGHAG)) interacts with FAD. 274–288 (GPRYCPSIEDKIVKF) is a binding site for NAD(+).

The protein belongs to the MnmG family. In terms of assembly, homodimer. Heterotetramer of two MnmE and two MnmG subunits. FAD is required as a cofactor.

Its subcellular location is the cytoplasm. In terms of biological role, NAD-binding protein involved in the addition of a carboxymethylaminomethyl (cmnm) group at the wobble position (U34) of certain tRNAs, forming tRNA-cmnm(5)s(2)U34. The polypeptide is tRNA uridine 5-carboxymethylaminomethyl modification enzyme MnmG (Chlamydia caviae (strain ATCC VR-813 / DSM 19441 / 03DC25 / GPIC) (Chlamydophila caviae)).